A 739-amino-acid polypeptide reads, in one-letter code: Nucleoprotein (739 aa).

The stretch at 334-363 (VNVGEQYQQLREAATEAEKQLQQYAESREL) forms a coiled coil. Disordered regions lie at residues 414–475 (RPNL…YHDD) and 498–642 (FELQ…IGQS). Residues 570–579 (TPIDQGDDDP) are compositionally biased toward acidic residues. A compositionally biased stretch (basic and acidic residues) spans 614–624 (AEAHEPPHKSS). The segment covering 625–634 (NEPAETSQLN) has biased composition (polar residues).

This sequence belongs to the filoviruses nucleoprotein family. Homooligomer. Homomultimerizes to form the nucleocapsid. Binds to viral genomic RNA. Interacts with VP35 and VP30 to form the nucleocapsid. Interacts with host PPP2R5C; this interaction leads to VP30 dephosphorylation and viral transcription. Interacts with VP24; this interaction facilitates nucleocapsid assembly and genome packaging. Interacts with matrix protein VP40; this interaction allows recruitment of the nucleocapsid into progeny virions. Interacts with host STAU1. Interacts with host NXF1 (via RNA-binding domain); this interaction recruits NXF1 to the inclusion bodies were viral replication takes place, probably to export viral mRNA-NXF1 complexes from these sites. Interacts with host CCDC92; this interaction sequesters NP in the host cytoplasm. Interacts with host TRIM14. Phosphorylated and O-glycosylated by host. Acetylated by host EP300 in vitro.

It is found in the virion. Its subcellular location is the host cytoplasm. Oligomerizes into helical capsid to encapsidate the viral genome, protecting it from nucleases and the cellular innate immune response. VP35 binds to and stabilizes monomeric NP, keeping it soluble. Upon virus replication, NP is recruited to bind cooperatively viral genomic RNA and VP35 is released. The encapsidated genomic RNA is termed the nucleocapsid and serves as template for transcription and replication. The nucleocapsid is helical with a pitch of 10.81 NP per turn and a diameter of about 22nm. Each NP binds to six nucleotides of viral genomic RNA, three being exposed to the solvant and three hidden into the nucleocapsid. Also recruits host PPP2R5C phosphatase to dephosphorylate VP30 and thereby promote viral transcription. Upon virion assembly and budding, NP binds to VP24 and possibly host STAU1. In Homo sapiens (Human), this protein is Nucleoprotein (NP).